We begin with the raw amino-acid sequence, 306 residues long: Glutamyl-Q tRNA(Asp) synthetase (306 aa).

Residues 29-33 and Asp65 each bind L-glutamate; that span reads RFAPS. The 'HIGH' region motif lies at 32 to 42; it reads PSPTGPLHLGN. Zn(2+) contacts are provided by Cys121, Cys123, Tyr141, and Cys145. L-glutamate contacts are provided by Tyr188 and Arg206. The 'KMSKS' region signature appears at 244–248; the sequence is KLAKR. Lys247 is an ATP binding site.

Belongs to the class-I aminoacyl-tRNA synthetase family. GluQ subfamily. Zn(2+) serves as cofactor.

Its function is as follows. Catalyzes the tRNA-independent activation of glutamate in presence of ATP and the subsequent transfer of glutamate onto a tRNA(Asp). Glutamate is transferred on the 2-amino-5-(4,5-dihydroxy-2-cyclopenten-1-yl) moiety of the queuosine in the wobble position of the QUC anticodon. The chain is Glutamyl-Q tRNA(Asp) synthetase from Prochlorococcus marinus (strain MIT 9313).